A 1062-amino-acid polypeptide reads, in one-letter code: Platelet-derived growth factor receptor alpha (1062 aa).

Positions 1–27 are cleaved as a signal peptide; the sequence is MFPPSSAPLLLPQLEELVVPLHTAFTL. Ig-like C2-type domains are found at residues 28 to 96, 91 to 184, 190 to 281, 287 to 381, and 389 to 493; these read TCQG…VYVP, IYVY…VHGW, LHVE…KQIA, SEFM…RTVS, and PAVI…IKLV. Topologically, residues 28-504 are extracellular; sequence TCQGEATIAW…NGPHPELTVA (477 aa). A disulfide bridge connects residues cysteine 29 and cysteine 74. Residues asparagine 79 and asparagine 132 are each glycosylated (N-linked (GlcNAc...) asparagine). 2 disulfides stabilise this stretch: cysteine 124–cysteine 165 and cysteine 211–cysteine 265. Residues asparagine 273, asparagine 333, asparagine 366, asparagine 433, and asparagine 444 are each glycosylated (N-linked (GlcNAc...) asparagine). Cysteines 410 and 477 form a disulfide. Residues 505 to 525 form a helical membrane-spanning segment; it reads AAVLVLLVIVIISLIVLVVIW. Over 526 to 1062 the chain is Cytoplasmic; it reads KQKPRYEIRW…CSDLVEDSFL (537 aa). A phosphotyrosine; by autocatalysis mark is found at tyrosine 548 and tyrosine 550. Residues 569-945 form the Protein kinase domain; the sequence is LVLGRILGSG…HYERVNHEFL (377 aa). Residues 575 to 583 and lysine 603 contribute to the ATP site; that span reads LGSGAFGKV. Residues tyrosine 697, tyrosine 708, tyrosine 719, tyrosine 731, and tyrosine 739 each carry the phosphotyrosine; by autocatalysis modification. The interval 734 to 754 is disordered; that stretch reads LQGSNYDHPPSQKGSNDGEMD. Aspartate 793 functions as the Proton acceptor in the catalytic mechanism. 2 positions are modified to phosphotyrosine; by autocatalysis: tyrosine 824 and tyrosine 963. Residues 975–986 show a composition bias toward basic and acidic residues; the sequence is KDRESGFDEQRL. Residues 975-1034 are disordered; the sequence is KDRESGFDEQRLSSDSGYIIPLPDLDPISDEEYGKRNRHSSQTSEESAIETGSSSSTFAK. Tyrosine 992 bears the Phosphotyrosine; by autocatalysis mark. The segment covering 1014–1032 has biased composition (polar residues); the sequence is SSQTSEESAIETGSSSSTF.

It belongs to the protein kinase superfamily. Tyr protein kinase family. CSF-1/PDGF receptor subfamily. Interacts with homodimeric pdgfa, pdgfb and pdgfc, and with heterodimers formed by pdgfa and pdgfb. monomer in the absence of bound ligand. Interaction with dimeric pdgfa, pdgfb and/or pdgfc leads to receptor dimerization, where both pdgfra homodimers and heterodimers with pdgfrb are observed. Ubiquitinated, leading to its degradation. In terms of processing, autophosphorylated on tyrosine residues upon ligand binding. Autophosphorylation occurs in trans, i.e. one subunit of the dimeric receptor phosphorylates tyrosine residues on the other subunit.

Its subcellular location is the cell membrane. It carries out the reaction L-tyrosyl-[protein] + ATP = O-phospho-L-tyrosyl-[protein] + ADP + H(+). With respect to regulation, present in an inactive conformation in the absence of bound ligand. Binding of pdgfa and/or pdgfb leads to dimerization and activation by autophosphorylation on tyrosine residues. Functionally, tyrosine-protein kinase that acts as a cell-surface receptor for pdgfa, pdgfb and pdgfc and plays an essential role in the regulation of embryonic development, cell proliferation, survival and chemotaxis. Depending on the context, promotes or inhibits cell proliferation and cell migration. Plays an important role in the differentiation of bone marrow-derived mesenchymal stem cells. Required for normal skeleton development. Required for normal development of the gastrointestinal tract. Plays a role in cell migration and chemotaxis in wound healing. Plays a role in platelet activation, secretion of agonists from platelet granules, and in thrombin-induced platelet aggregation. Binding of its cognate ligands - homodimeric pdgfa, homodimeric pdgfb, heterodimers formed by pdgfa and pdgfb or homodimeric pdgfc -leads to the activation of several signaling cascades; the response depends on the nature of the bound ligand and is modulated by the formation of heterodimers between pdgfra and pdgfrb. Phosphorylates pik3r1, plcg1, and ptpn11. Activation of plcg1 leads to the production of the cellular signaling molecules diacylglycerol and inositol 1,4,5-trisphosphate, mobilization of cytosolic Ca(2+) and the activation of protein kinase C. Phosphorylates pik3r1, the regulatory subunit of phosphatidylinositol 3-kinase, and thereby mediates activation of the AKT1 signaling pathway. Mediates activation of hras and of the MAP kinases mapk1/erk2 and/or mapk3/erk1. Promotes activation of STAT family members stat1, stat3 and stat5a and/or stat5b. Receptor signaling is down-regulated by protein phosphatases that dephosphorylate the receptor and its down-stream effectors, and by rapid internalization of the activated receptor. The sequence is that of Platelet-derived growth factor receptor alpha (pdgfra) from Takifugu rubripes (Japanese pufferfish).